A 274-amino-acid chain; its full sequence is Large ribosomal subunit protein uL2 (274 aa).

Residues Ala-224–Tyr-256 form a disordered region. Over residues Asp-229–Val-246 the composition is skewed to basic and acidic residues.

This sequence belongs to the universal ribosomal protein uL2 family. In terms of assembly, part of the 50S ribosomal subunit. Forms a bridge to the 30S subunit in the 70S ribosome.

One of the primary rRNA binding proteins. Required for association of the 30S and 50S subunits to form the 70S ribosome, for tRNA binding and peptide bond formation. It has been suggested to have peptidyltransferase activity; this is somewhat controversial. Makes several contacts with the 16S rRNA in the 70S ribosome. In Acidovorax ebreus (strain TPSY) (Diaphorobacter sp. (strain TPSY)), this protein is Large ribosomal subunit protein uL2.